The sequence spans 518 residues: Voltage-gated potassium channel regulatory subunit KCNG2 (518 aa).

Over 1–214 (MALLTGNADR…DMVENPHSGI (214 aa)) the chain is Cytoplasmic. The chain crosses the membrane as a helical span at residues 215–236 (PGKIFACISISFVAITAVSLCI). Over 237–257 (STMPDVREEEDRGECSQKCYD) the chain is Extracellular. Residues 258–279 (IFVLETVCVAWFSFEFLLRSIQ) form a helical membrane-spanning segment. Topologically, residues 280–290 (AENKCAFLKTP) are cytoplasmic. The chain crosses the membrane as a helical span at residues 291–311 (LNIIDILAILPFYISLIVDMA). At 312–331 (STKNSSKPGGGAGNKYLERV) the chain is on the extracellular side. A helical; Voltage-sensor membrane pass occupies residues 332-352 (GLVLRFLRALRILYVMRLARH). The Cytoplasmic portion of the chain corresponds to 353–367 (SLGLQTLGLTVRRCT). Residues 368–389 (REFGLLLLFLCVAMALFSPLVY) form a helical membrane-spanning segment. Residues 390–404 (LAESELGAKQEFTSI) are Extracellular-facing. The helical intramembrane region spans 405-416 (PTSYWWAVISMT). A Selectivity filter motif is present at residues 417–422 (TVGYGD). Residues 417-424 (TVGYGDMV) lie within the membrane without spanning it. The Extracellular segment spans residues 425 to 431 (PRSIPGQ). Residues 432–460 (VVALSSILSGILLMAFPVTSIFHTFSRSY) traverse the membrane as a helical segment. Topologically, residues 461–518 (SELKEQQQRAASRQMHQLEESTKLAGGGSSQWITAASPPDAAREDGRPELDQEAKRSC) are cytoplasmic. Residues 473–518 (RQMHQLEESTKLAGGGSSQWITAASPPDAAREDGRPELDQEAKRSC) form a disordered region. The span at 501 to 518 (AAREDGRPELDQEAKRSC) shows a compositional bias: basic and acidic residues.

This sequence belongs to the potassium channel family. G (TC 1.A.1.2) subfamily. Kv6.2/KCNG2 sub-subfamily. As to quaternary structure, heterodimer with KCNB1.

It is found in the cell membrane. Its function is as follows. Regulatory alpha-subunit of the voltage-gated potassium (Kv) channel which, when coassembled with KCNB1, can modulate the kinetics and conductance-voltage relationship. Modulates channel activity by shifting the threshold and the half-maximal activation to more negative values. Potassium channel subunit that does not form functional channels by itself. In Gallus gallus (Chicken), this protein is Voltage-gated potassium channel regulatory subunit KCNG2.